Reading from the N-terminus, the 23-residue chain is Glutamine synthetase (23 aa).

It belongs to the glutamine synthetase family. Oligomer of 12 subunits arranged in the form of two hexagons. The cofactor is Mg(2+).

Its subcellular location is the cytoplasm. It catalyses the reaction L-glutamate + NH4(+) + ATP = L-glutamine + ADP + phosphate + H(+). Its activity is regulated as follows. The activity of this enzyme could be controlled by adenylation under conditions of abundant glutamine. Functionally, involved in nitrogen metabolism via ammonium assimilation. Catalyzes the ATP-dependent biosynthesis of glutamine from glutamate and ammonia. In Phormidium lapideum, this protein is Glutamine synthetase.